The following is a 299-amino-acid chain: UDP-N-acetylenolpyruvoylglucosamine reductase (299 aa).

The 174-residue stretch at 19-192 folds into the FAD-binding PCMH-type domain; that stretch reads LGGQALAEVR…AAVTLQLRRS (174 aa). Arginine 169 is an active-site residue. Cysteine 221 serves as the catalytic Proton donor. Glutamate 292 is an active-site residue.

This sequence belongs to the MurB family. Requires FAD as cofactor.

The protein localises to the cytoplasm. The enzyme catalyses UDP-N-acetyl-alpha-D-muramate + NADP(+) = UDP-N-acetyl-3-O-(1-carboxyvinyl)-alpha-D-glucosamine + NADPH + H(+). It functions in the pathway cell wall biogenesis; peptidoglycan biosynthesis. Functionally, cell wall formation. In Oleidesulfovibrio alaskensis (strain ATCC BAA-1058 / DSM 17464 / G20) (Desulfovibrio alaskensis), this protein is UDP-N-acetylenolpyruvoylglucosamine reductase.